A 127-amino-acid chain; its full sequence is MKKLTKTNSHRQQKLASIINEVLIEILKRGKMLDRRLFDCPLTITKIVVTADLKIANCYFFPFNTKLTFNDIMDALNNSKHAIRNFITNKINMKFSPEIRFHYDYGFDNAIKIEKLLKSSSLKDKTN.

Belongs to the RbfA family. As to quaternary structure, monomer. Binds 30S ribosomal subunits, but not 50S ribosomal subunits or 70S ribosomes.

The protein localises to the cytoplasm. In terms of biological role, one of several proteins that assist in the late maturation steps of the functional core of the 30S ribosomal subunit. Associates with free 30S ribosomal subunits (but not with 30S subunits that are part of 70S ribosomes or polysomes). Required for efficient processing of 16S rRNA. May interact with the 5'-terminal helix region of 16S rRNA. This Rickettsia typhi (strain ATCC VR-144 / Wilmington) protein is Ribosome-binding factor A.